We begin with the raw amino-acid sequence, 424 residues long: UPF0415 protein C7orf25 homolog (424 aa).

The protein belongs to the UPF0415 family.

This is UPF0415 protein C7orf25 homolog from Xenopus laevis (African clawed frog).